An 87-amino-acid polypeptide reads, in one-letter code: MMQHQVNVSARFNPETLERVLRVVRHRGFHVCSMNMAAASDAQNINIELTVASPRSVDLLFSQLNKLVDVAHVAICQSTTTSQQIRA.

The region spanning 5-78 (QVNVSARFNP…DVAHVAICQS (74 aa)) is the ACT domain.

Tetramer of two large and two small chains. Mg(2+) is required as a cofactor. Requires thiamine diphosphate as cofactor.

It catalyses the reaction 2 pyruvate + H(+) = (2S)-2-acetolactate + CO2. It functions in the pathway amino-acid biosynthesis; L-isoleucine biosynthesis; L-isoleucine from 2-oxobutanoate: step 1/4. Its pathway is amino-acid biosynthesis; L-valine biosynthesis; L-valine from pyruvate: step 1/4. This Escherichia coli O6:H1 (strain CFT073 / ATCC 700928 / UPEC) protein is Acetolactate synthase isozyme 2 small subunit (ilvM).